The chain runs to 675 residues: Glycerophosphocholine phosphodiesterase GPCPD1 (675 aa).

The region spanning M1–I115 is the CBM20 domain. Substrate contacts are provided by residues R70 and H88–K89. 2 positions are modified to phosphoserine: S178 and S427. The GP-PDE domain maps to P321–Q621. At Y611 the chain carries Phosphotyrosine.

It belongs to the glycerophosphoryl diester phosphodiesterase family. In terms of tissue distribution, widely expressed with highest levels in skeletal muscle and heart.

The protein localises to the cytoplasm. It localises to the cytosol. The enzyme catalyses sn-glycerol 3-phosphocholine + H2O = sn-glycerol 3-phosphate + choline + H(+). Its function is as follows. May be involved in the negative regulation of skeletal muscle differentiation, independently of its glycerophosphocholine phosphodiesterase activity. The chain is Glycerophosphocholine phosphodiesterase GPCPD1 (Gpcpd1) from Mus musculus (Mouse).